A 412-amino-acid polypeptide reads, in one-letter code: Putative competence-damage inducible protein (412 aa).

The protein belongs to the CinA family.

This is Putative competence-damage inducible protein from Bacillus cereus (strain B4264).